A 65-amino-acid polypeptide reads, in one-letter code: Small ribosomal subunit protein eS27 (65 aa).

C20, C23, C39, and C42 together coordinate Zn(2+). A C4-type zinc finger spans residues 20–42 (CIDCGNEQIVFSHPATKVRCLVC).

The protein belongs to the eukaryotic ribosomal protein eS27 family. Part of the 30S ribosomal subunit. Zn(2+) serves as cofactor.

The sequence is that of Small ribosomal subunit protein eS27 from Thermococcus gammatolerans (strain DSM 15229 / JCM 11827 / EJ3).